The following is a 441-amino-acid chain: G-protein coupled receptor family C group 5 member C (441 aa).

The first 22 residues, 1 to 22 (MATHKTLLMCLGLPLFFPGALA), serve as a signal peptide directing secretion. The Extracellular portion of the chain corresponds to 23 to 49 (QNHAPPGCSPDLDPLYYNLCDRSGAWG). The chain crosses the membrane as a helical span at residues 50–70 (IVLEAVAGAGIITTFVLTIIL). Residues 71–84 (VASLPFVQDTKKRS) lie on the Cytoplasmic side of the membrane. Residues 85–105 (LLGTQVFFLLGTLGLFCLVFA) form a helical membrane-spanning segment. Residues 106–119 (CVVKPDFSTCASRR) are Extracellular-facing. A helical membrane pass occupies residues 120–140 (FLFGVLFAICFSCLIAHTLSL). The Cytoplasmic portion of the chain corresponds to 141–154 (NFLARKNHGPRGWV). Residues 155 to 175 (IFTVALLLTLVEVIINTEWLI) form a helical membrane-spanning segment. Over 176 to 207 (ITLVRGGGQVSTPGNGSADWTVTSPCAIANMD) the chain is Extracellular. N190 is a glycosylation site (N-linked (GlcNAc...) asparagine). The helical transmembrane segment at 208–228 (FVMALIYVMLLLLAAFLGAWP) threads the bilayer. Over 229–240 (TLCGRFKRWRKH) the chain is Cytoplasmic. Residues 241–261 (GVFVLLTTATSIAIWVVWIVM) traverse the membrane as a helical segment. The Extracellular portion of the chain corresponds to 262 to 278 (YTYGNKQHHSPTWDDPT). The helical transmembrane segment at 279 to 299 (LAIALAANAWTFVFFYVIPEV) threads the bilayer. The Cytoplasmic segment spans residues 300–441 (SQVTKPSPEQ…DQSPKNKTRW (142 aa)). Phosphoserine is present on residues S343, S382, S402, and S405. Y413 bears the Phosphotyrosine mark. Positions 419-441 (QVATPTKDGKISQDQSPKNKTRW) are disordered. T422 is subject to Phosphothreonine. A compositionally biased stretch (polar residues) spans 430-441 (SQDQSPKNKTRW). Residue S434 is modified to Phosphoserine.

It belongs to the G-protein coupled receptor 3 family.

It localises to the cell membrane. In terms of biological role, this retinoic acid-inducible G-protein coupled receptor provide evidence for a possible interaction between retinoid and G-protein signaling pathways. This Rattus norvegicus (Rat) protein is G-protein coupled receptor family C group 5 member C (Gprc5c).